The sequence spans 440 residues: Protein disulfide-isomerase 2-3 (440 aa).

The first 24 residues, 1 to 24 (MYKSPLTLLTLLTICFGFFDLSSA), serve as a signal peptide directing secretion. Thioredoxin domains follow at residues 25–136 (LYGS…KQIK) and 154–269 (SKEK…ELVE). Catalysis depends on nucleophile residues Cys-60 and Cys-63. Cys-60 and Cys-63 form a disulfide bridge. Residues 143 to 163 (LEGKSKPTGGGSKEKKSEPSA) are disordered. An N-linked (GlcNAc...) asparagine glycan is attached at Asn-168. Active-site nucleophile residues include Cys-192 and Cys-195. Residues Cys-192 and Cys-195 are joined by a disulfide bond. Residues 437–440 (KDEL) carry the Prevents secretion from ER motif.

Belongs to the protein disulfide isomerase family. As to expression, widely expressed.

It is found in the endoplasmic reticulum lumen. The catalysed reaction is Catalyzes the rearrangement of -S-S- bonds in proteins.. In terms of biological role, acts as a protein-folding catalyst that interacts with nascent polypeptides to catalyze the formation, isomerization, and reduction or oxidation of disulfide bonds. The polypeptide is Protein disulfide-isomerase 2-3 (PDIL2-3) (Arabidopsis thaliana (Mouse-ear cress)).